The following is a 382-amino-acid chain: Alkanesulfonate monooxygenase (382 aa).

It belongs to the SsuD family.

It carries out the reaction an alkanesulfonate + FMNH2 + O2 = an aldehyde + FMN + sulfite + H2O + 2 H(+). Catalyzes the desulfonation of aliphatic sulfonates. The sequence is that of Alkanesulfonate monooxygenase from Pseudomonas putida (strain GB-1).